The sequence spans 293 residues: MQSQQYSTPNLSLFNDGSAIIGEIRPIHGANQDVINDRALQLLQRTREHRNFLHRAHDDIRRYEPPTTQIDALENDEDENFYLNDMNTNEEYQSDRESVKSGLNSIANRYKNAVQSSPSDLDDIDFVGEEEQDLSYDESDYSDPLQEIDSNYRESPRRTTDKILKSSSKNYRRRENLGGEIRKIRQEKANKTATRYRPSDLALYEIRKYQQSTDLLISKIPFARLVKEVTDNFILENQHLQWHSMAILALQEASEAYLVGLLEHANLLALHAKRITLMKKDVQLARRIRGQFI.

Acidic residues predominate over residues 132–141; that stretch reads QDLSYDESDY. A disordered region spans residues 132-169; that stretch reads QDLSYDESDYSDPLQEIDSNYRESPRRTTDKILKSSSK. Residues 150 to 164 are compositionally biased toward basic and acidic residues; sequence SNYRESPRRTTDKIL. The H3-like stretch occupies residues 157–291; sequence RRTTDKILKS…VQLARRIRGQ (135 aa).

The protein belongs to the histone H3 family. As to quaternary structure, component of centromeric nucleosomes, where DNA is wrapped around a histone octamer core. The octamer contains two molecules each of H2A, H2B, CSE4/CENPA and H4 assembled in one CSE4-H4 heterotetramer and two H2A-H2B heterodimers. Interacts with the inner kinetochore. In terms of processing, ubiquitinated. Is degraded through ubiquitin-mediated proteolysis when not protected by its association to the kinetochore.

The protein localises to the nucleus. Its subcellular location is the chromosome. It is found in the centromere. Its function is as follows. Histone H3-like nucleosomal protein that is specifically found in centromeric nucleosomes. Replaces conventional H3 in the nucleosome core of centromeric chromatin that serves as an assembly site for the inner kinetochore. Required for recruitment and assembly of kinetochore proteins, mitotic progression and chromosome segregation. May serve as an epigenetic mark that propagates centromere identity through replication and cell division. The protein is Histone H3-like centromeric protein CSE4 (CSE4) of Monosporozyma servazzii (Yeast).